We begin with the raw amino-acid sequence, 425 residues long: Dual-specificity RNA methyltransferase RlmN (425 aa).

The active-site Proton acceptor is Glu-136. Positions 142 to 381 (GDDRGTLCVS…FTAGYASPVR (240 aa)) constitute a Radical SAM core domain. Cysteines 149 and 392 form a disulfide. 3 residues coordinate [4Fe-4S] cluster: Cys-156, Cys-160, and Cys-163. Residues 218-219 (GE), Ser-250, 272-274 (SLH), and Asn-349 each bind S-adenosyl-L-methionine. Catalysis depends on Cys-392, which acts as the S-methylcysteine intermediate.

The protein belongs to the radical SAM superfamily. RlmN family. Requires [4Fe-4S] cluster as cofactor.

The protein localises to the cytoplasm. It carries out the reaction adenosine(2503) in 23S rRNA + 2 reduced [2Fe-2S]-[ferredoxin] + 2 S-adenosyl-L-methionine = 2-methyladenosine(2503) in 23S rRNA + 5'-deoxyadenosine + L-methionine + 2 oxidized [2Fe-2S]-[ferredoxin] + S-adenosyl-L-homocysteine. It catalyses the reaction adenosine(37) in tRNA + 2 reduced [2Fe-2S]-[ferredoxin] + 2 S-adenosyl-L-methionine = 2-methyladenosine(37) in tRNA + 5'-deoxyadenosine + L-methionine + 2 oxidized [2Fe-2S]-[ferredoxin] + S-adenosyl-L-homocysteine. Its function is as follows. Specifically methylates position 2 of adenine 2503 in 23S rRNA and position 2 of adenine 37 in tRNAs. m2A2503 modification seems to play a crucial role in the proofreading step occurring at the peptidyl transferase center and thus would serve to optimize ribosomal fidelity. In Methylorubrum extorquens (strain PA1) (Methylobacterium extorquens), this protein is Dual-specificity RNA methyltransferase RlmN.